The sequence spans 533 residues: 1-aminocyclopropane-1-carboxylate synthase 5 (533 aa).

At Lys358 the chain carries N6-(pyridoxal phosphate)lysine.

This sequence belongs to the class-I pyridoxal-phosphate-dependent aminotransferase family. The cofactor is pyridoxal 5'-phosphate. In terms of tissue distribution, expressed in shoots and leaf blades. Expressed at low levels in leaf sheaths. Expressed in vasculature of roots and shoots.

The enzyme catalyses S-adenosyl-L-methionine = 1-aminocyclopropane-1-carboxylate + S-methyl-5'-thioadenosine + H(+). It participates in alkene biosynthesis; ethylene biosynthesis via S-adenosyl-L-methionine; ethylene from S-adenosyl-L-methionine: step 1/2. Its function is as follows. Catalyzes the formation of 1-aminocyclopropane-1-carboxylate, a direct precursor of ethylene in higher plants. This is 1-aminocyclopropane-1-carboxylate synthase 5 from Oryza sativa subsp. japonica (Rice).